The sequence spans 336 residues: UPF0324 membrane protein SP_0034 (336 aa).

8 consecutive transmembrane segments (helical) span residues 65 to 84, 91 to 113, 118 to 140, 153 to 175, 211 to 233, 249 to 271, 286 to 305, and 312 to 334; these read LLQYAVVLLGFGLNISQVFA, PVILSTISIALIIAYLFQRFFAL, ATLVGVGSSICGGSAIAATAPVI, VIFFFNVLAALIFPTLGTWLHLS, SATIVKLTRTLAIIPITLFLSYW, VFPLFILYFILASLLTTLLTSLG, FLIVMAMSAIGLKTNLVAMV, and ILLGAICWIAIILTTLGMQTLIG.

The protein belongs to the UPF0324 family.

It is found in the cell membrane. The sequence is that of UPF0324 membrane protein SP_0034 from Streptococcus pneumoniae serotype 4 (strain ATCC BAA-334 / TIGR4).